Here is a 130-residue protein sequence, read N- to C-terminus: Ribosome-binding factor A (130 aa).

This sequence belongs to the RbfA family. In terms of assembly, monomer. Binds 30S ribosomal subunits, but not 50S ribosomal subunits or 70S ribosomes.

The protein resides in the cytoplasm. Functionally, one of several proteins that assist in the late maturation steps of the functional core of the 30S ribosomal subunit. Associates with free 30S ribosomal subunits (but not with 30S subunits that are part of 70S ribosomes or polysomes). Required for efficient processing of 16S rRNA. May interact with the 5'-terminal helix region of 16S rRNA. This is Ribosome-binding factor A from Prochlorococcus marinus (strain AS9601).